A 72-amino-acid chain; its full sequence is Threonine dehydratase operon activator protein (72 aa).

Probable trans-acting positive activator for the tdc operon. In Escherichia coli (strain K12), this protein is Threonine dehydratase operon activator protein (tdcR).